We begin with the raw amino-acid sequence, 197 residues long: Phospholipid hydroperoxide glutathione peroxidase (197 aa).

Ser40 carries the post-translational modification Phosphoserine. Sec73 is an active-site residue. Residue Sec73 is a non-standard amino acid, selenocysteine.

This sequence belongs to the glutathione peroxidase family. In terms of assembly, monomer. Has a tendency to form higher mass oligomers. Interacts with FUNDC1; this interaction promotes GPX4 recruitment into mitochondria through TOM/TIM complex where it is degraded by mitophagy.

It localises to the mitochondrion. Its subcellular location is the cytoplasm. It catalyses the reaction a hydroperoxy polyunsaturated fatty acid + 2 glutathione = a hydroxy polyunsaturated fatty acid + glutathione disulfide + H2O. The enzyme catalyses 2 glutathione + H2O2 = glutathione disulfide + 2 H2O. It carries out the reaction tert-butyl hydroperoxide + 2 glutathione = tert-butanol + glutathione disulfide + H2O. The catalysed reaction is cumene hydroperoxide + 2 glutathione = 2-phenylpropan-2-ol + glutathione disulfide + H2O. It catalyses the reaction (9S)-hydroperoxy-(10E,12Z)-octadecadienoate + 2 glutathione = (9S)-hydroxy-(10E,12Z)-octadecadienoate + glutathione disulfide + H2O. The enzyme catalyses (13S)-hydroperoxy-(9Z,11E)-octadecadienoate + 2 glutathione = (13S)-hydroxy-(9Z,11E)-octadecadienoate + glutathione disulfide + H2O. It carries out the reaction (5S)-hydroperoxy-(6E,8Z,11Z,14Z)-eicosatetraenoate + 2 glutathione = (5S)-hydroxy-(6E,8Z,11Z,14Z)-eicosatetraenoate + glutathione disulfide + H2O. The catalysed reaction is (12R)-hydroperoxy-(5Z,8Z,10E,14Z)-eicosatetraenoate + 2 glutathione = (12R)-hydroxy-(5Z,8Z,10E,14Z)-eicosatetraenoate + glutathione disulfide + H2O. It catalyses the reaction (12S)-hydroperoxy-(5Z,8Z,10E,14Z)-eicosatetraenoate + 2 glutathione = (12S)-hydroxy-(5Z,8Z,10E,14Z)-eicosatetraenoate + glutathione disulfide + H2O. The enzyme catalyses (15S)-hydroperoxy-(5Z,8Z,11Z,13E)-eicosatetraenoate + 2 glutathione = (15S)-hydroxy-(5Z,8Z,11Z,13E)-eicosatetraenoate + glutathione disulfide + H2O. It carries out the reaction (5S)-hydroperoxy-(6E,8Z,11Z,14Z,17Z)-eicosapentaenoate + 2 glutathione = (5S)-hydroxy-(6E,8Z,11Z,14Z,17Z)-eicosapentaenoate + glutathione disulfide + H2O. The catalysed reaction is (12S)-hydroperoxy-(5Z,8Z,10E,14Z,17Z)-eicosapentaenoate + 2 glutathione = (12S)-hydroxy-(5Z,8Z,10E,14Z,17Z)-eicosapentaenoate + glutathione disulfide + H2O. It catalyses the reaction (15S)-hydroperoxy-(5Z,8Z,11Z,13E,17Z)-eicosapentaenoate + 2 glutathione = (15S)-hydroxy-(5Z,8Z,11Z,13E,17Z)-eicosapentaenoate + glutathione disulfide + H2O. The enzyme catalyses (15S)-hydroperoxy-(11Z,13E)-eicosadienoate + 2 glutathione = (15S)-hydroxy-(11Z,13E)-eicosadienoate + glutathione disulfide + H2O. It carries out the reaction (17S)-hydroperoxy-(4Z,7Z,10Z,13Z,15E,19Z)-docosahexaenoate + 2 glutathione = (17S)-hydroxy-(4Z,7Z,10Z,13Z,15E,19Z)-docosahexaenoate + glutathione disulfide + H2O. The catalysed reaction is a hydroperoxy-1,2-diacyl-glycero-3-phosphocholine + 2 glutathione = a hydroxy-1,2-diacyl-glycero-3-phosphocholine + glutathione disulfide + H2O. Essential antioxidant peroxidase that directly reduces phospholipid hydroperoxide even if they are incorporated in membranes and lipoproteins. Can also reduce fatty acid hydroperoxide, cholesterol hydroperoxide and thymine hydroperoxide. Plays a key role in protecting cells from oxidative damage by preventing membrane lipid peroxidation. Required to prevent cells from ferroptosis, a non-apoptotic cell death resulting from an iron-dependent accumulation of lipid reactive oxygen species. The presence of selenocysteine (Sec) versus Cys at the active site is essential for life: it provides resistance to overoxidation and prevents cells against ferroptosis. The presence of Sec at the active site is also essential for the survival of a specific type of parvalbumin-positive interneurons, thereby preventing against fatal epileptic seizures. May be required to protect cells from the toxicity of ingested lipid hydroperoxides. Required for normal sperm development and male fertility. Essential for maturation and survival of photoreceptor cells. Plays a role in a primary T-cell response to viral and parasitic infection by protecting T-cells from ferroptosis and by supporting T-cell expansion. Plays a role of glutathione peroxidase in platelets in the arachidonic acid metabolism. Reduces hydroperoxy ester lipids formed by a 15-lipoxygenase that may play a role as down-regulator of the cellular 15-lipoxygenase pathway. Can also reduce small soluble hydroperoxides such as H2O2, cumene hydroperoxide and tert-butyl hydroperoxide. The polypeptide is Phospholipid hydroperoxide glutathione peroxidase (Sus scrofa (Pig)).